Reading from the N-terminus, the 391-residue chain is Eukaryotic initiation factor 4A-3 (391 aa).

The Q motif signature appears at 18–46 (ASFAEMGIKDDLLRGVYQYGFEKPSAIQQ). The Helicase ATP-binding domain occupies 49–219 (VLPIISGRDV…SKFMTDPVRI (171 aa)). 62–69 (AQSGTGKT) serves as a coordination point for ATP. The DEAD box motif lies at 167-170 (DESD). Positions 230–391 (GIKQFFVAVE…EMPMNVADLI (162 aa)) constitute a Helicase C-terminal domain.

This sequence belongs to the DEAD box helicase family. eIF4A subfamily. In terms of assembly, eIF4F is a multi-subunit complex, the composition of which varies with external and internal environmental conditions. It is composed of at least EIF4A, EIF4E and EIF4G.

The catalysed reaction is ATP + H2O = ADP + phosphate + H(+). ATP-dependent RNA helicase which is a subunit of the eIF4F complex involved in cap recognition and is required for mRNA binding to ribosome. In the current model of translation initiation, eIF4A unwinds RNA secondary structures in the 5'-UTR of mRNAs which is necessary to allow efficient binding of the small ribosomal subunit, and subsequent scanning for the initiator codon. This chain is Eukaryotic initiation factor 4A-3, found in Nicotiana plumbaginifolia (Leadwort-leaved tobacco).